Consider the following 123-residue polypeptide: Snaclec echicetin subunit beta (123 aa).

In terms of domain architecture, C-type lectin spans 1–121 (NCLPDWSVYE…SGEFYFVCKC (121 aa)). 3 disulfide bridges follow: Cys-2–Cys-13, Cys-30–Cys-119, and Cys-96–Cys-111.

This sequence belongs to the snaclec family. As to quaternary structure, heterodimer of subunits alpha and beta; disulfide-linked. Forms an active complex with the pentameric immunoglobuline Mkappa (IgMkappa). Expressed by the venom gland.

Its subcellular location is the secreted. Functionally, echicetin itself inhibits aggregation of washed platelets induced by vWF, thrombin or alboaggregin-A. However, when complexed with the pentameric plasma immunoglobulin Mkappa (IgMkappa), echicetin binds specifically to GPIb and activates platelets. This is caused by P-selectin expression and activation of alpha-IIb/beta-3 as well as tyrosine phosphorylation of several signal transduction molecules, including p53/56(LYN), p64, p72(SYK), p70 to p90, and p120. In vivo, it induces thrombocytopenia when injected into mice, probably accounting of activation of platelets rather than inhibition. This chain is Snaclec echicetin subunit beta, found in Echis carinatus sochureki (Saw-scaled viper).